Consider the following 1770-residue polypeptide: Transposon Ty2-DR3 Gag-Pol polyprotein (1770 aa).

6 stretches are compositionally biased toward polar residues: residues 1–11 (MESQQLHQNPH), 19–39 (ASVTSKEVPSNQDPLAVSASN), 49–60 (KVNSQQETTPGT), 366–390 (VSRTSPNTTNTKVTSRNYHRTNSSK), 399–408 (IATSSKFSRV), and 415–435 (ESTVSSQYLSDDNELSLGQQQ). 2 disordered regions span residues 1–89 (MESQ…QQHG) and 355–449 (SQYK…SNDE). Positions 295-397 (ENNINVSDRL…SSKPRAAKAH (103 aa)) are RNA-binding. The For protease activity; shared with dimeric partner role is filled by aspartate 457. Residues 579–636 (NVNKSKSVNKYPYPLIHRMLGHANFRSIQKSLKKNAVTYLKESDIEWSNASTYQCPDC) are integrase-type zinc finger-like. Residues 656–831 (ESYEPFQYLH…AGLDITTILP (176 aa)) form the Integrase catalytic domain. Mg(2+) contacts are provided by aspartate 667 and aspartate 732. Disordered regions lie at residues 1005–1038 (GGTIESDTTSPRHSSTFTARNQKRPGSPNDMIDL) and 1057–1205 (GGTE…TEIE). Polar residues-rich tracts occupy residues 1009–1024 (ESDTTSPRHSSTFTAR) and 1065–1082 (QRNSDTNIKYRTTNSTPS). Residues 1193–1227 (KKRSLEDNETEIEVSRDTWNNKNMRSLEPPRSKKR) carry the Bipartite nuclear localization signal motif. In terms of domain architecture, Reverse transcriptase Ty1/copia-type spans 1353-1491 (NDYYITQLDI…DILGLEIKYQ (139 aa)). Mg(2+) contacts are provided by aspartate 1361, aspartate 1442, aspartate 1443, aspartate 1625, glutamate 1667, and aspartate 1700. In terms of domain architecture, RNase H Ty1/copia-type spans 1625–1767 (DASYGNQPYY…IKTFKLLTNK (143 aa)).

As to quaternary structure, the capsid protein forms a homotrimer, from which the VLPs are assembled. The protease is a homodimer, whose active site consists of two apposed aspartic acid residues. In terms of processing, initially, virus-like particles (VLPs) are composed of the structural unprocessed proteins Gag and Gag-Pol, and also contain the host initiator methionine tRNA (tRNA(i)-Met) which serves as a primer for minus-strand DNA synthesis, and a dimer of genomic Ty RNA. Processing of the polyproteins occurs within the particle and proceeds by an ordered pathway, called maturation. First, the protease (PR) is released by autocatalytic cleavage of the Gag-Pol polyprotein, and this cleavage is a prerequisite for subsequent processing at the remaining sites to release the mature structural and catalytic proteins. Maturation takes place prior to the RT reaction and is required to produce transposition-competent VLPs.

It localises to the cytoplasm. Its subcellular location is the nucleus. It catalyses the reaction DNA(n) + a 2'-deoxyribonucleoside 5'-triphosphate = DNA(n+1) + diphosphate. It carries out the reaction Endonucleolytic cleavage to 5'-phosphomonoester.. In terms of biological role, capsid protein (CA) is the structural component of the virus-like particle (VLP), forming the shell that encapsulates the retrotransposons dimeric RNA genome. The particles are assembled from trimer-clustered units and there are holes in the capsid shells that allow for the diffusion of macromolecules. CA also has nucleocapsid-like chaperone activity, promoting primer tRNA(i)-Met annealing to the multipartite primer-binding site (PBS), dimerization of Ty2 RNA and initiation of reverse transcription. Functionally, the aspartyl protease (PR) mediates the proteolytic cleavages of the Gag and Gag-Pol polyproteins after assembly of the VLP. Its function is as follows. Reverse transcriptase/ribonuclease H (RT) is a multifunctional enzyme that catalyzes the conversion of the retro-elements RNA genome into dsDNA within the VLP. The enzyme displays a DNA polymerase activity that can copy either DNA or RNA templates, and a ribonuclease H (RNase H) activity that cleaves the RNA strand of RNA-DNA heteroduplexes during plus-strand synthesis and hydrolyzes RNA primers. The conversion leads to a linear dsDNA copy of the retrotransposon that includes long terminal repeats (LTRs) at both ends. Integrase (IN) targets the VLP to the nucleus, where a subparticle preintegration complex (PIC) containing at least integrase and the newly synthesized dsDNA copy of the retrotransposon must transit the nuclear membrane. Once in the nucleus, integrase performs the integration of the dsDNA into the host genome. This is Transposon Ty2-DR3 Gag-Pol polyprotein (TY2B-DR3) from Saccharomyces cerevisiae (strain ATCC 204508 / S288c) (Baker's yeast).